The primary structure comprises 201 residues: GTP cyclohydrolase 1 (201 aa).

The segment at 1 to 20 (MDATVKKMSPETSRPSREEA) is disordered. Zn(2+) contacts are provided by cysteine 91, histidine 94, and cysteine 162.

This sequence belongs to the GTP cyclohydrolase I family. As to quaternary structure, homomer.

The enzyme catalyses GTP + H2O = 7,8-dihydroneopterin 3'-triphosphate + formate + H(+). Its pathway is cofactor biosynthesis; 7,8-dihydroneopterin triphosphate biosynthesis; 7,8-dihydroneopterin triphosphate from GTP: step 1/1. The polypeptide is GTP cyclohydrolase 1 (Allorhizobium ampelinum (strain ATCC BAA-846 / DSM 112012 / S4) (Agrobacterium vitis (strain S4))).